Reading from the N-terminus, the 154-residue chain is MVKAVAVLRGDAKVGGTVVFEQESESAPTTITWDITGNDANAKRGFHIHTFGDNTNGCTSAGPHFNPHGKTHGAPTDEARHVGDLGNLETDGQGNAKGSVKDEHVKLIGPHSVIGRTVVIHAGTDDLGKGDNEESLKTGNAGPRPACGVIGISS.

Positions 47, 49, and 64 each coordinate Cu cation. Cysteine 58 and cysteine 147 are joined by a disulfide. The Zn(2+) site is built by histidine 64, histidine 72, histidine 81, and aspartate 84. A Cu cation-binding site is contributed by histidine 121. Arginine 144 serves as a coordination point for substrate.

The protein belongs to the Cu-Zn superoxide dismutase family. As to quaternary structure, homodimer. Requires Cu cation as cofactor. Zn(2+) is required as a cofactor.

It is found in the cytoplasm. The catalysed reaction is 2 superoxide + 2 H(+) = H2O2 + O2. In terms of biological role, destroys radicals which are normally produced within the cells and which are toxic to biological systems. This chain is Superoxide dismutase [Cu-Zn] (SOD1), found in Claviceps purpurea (strain 20.1) (Ergot fungus).